The sequence spans 583 residues: 15-cis-phytoene desaturase, chloroplastic/chromoplastic (583 aa).

The N-terminal 111 residues, 1–111, are a transit peptide targeting the chloroplast and chromoplast; sequence MPQIGLVSAV…FRASPRPTKP (111 aa). FAD is bound by residues 118–134, 141–142, Lys-149, 166–167, and Tyr-172; these read GAGL…ADAG, EA, and HI. Arg-307 serves as a coordination point for substrate. The FAD site is built by Ile-349 and Asp-538. Ala-546 contacts substrate. Met-548 is a binding site for FAD.

Belongs to the carotenoid/retinoid oxidoreductase family. As to quaternary structure, homotetramer. FAD serves as cofactor.

Its subcellular location is the plastid. The protein localises to the chloroplast. The protein resides in the chromoplast. It is found in the membrane. It catalyses the reaction 2 a plastoquinone + 15-cis-phytoene = 9,9',15-tri-cis-zeta-carotene + 2 a plastoquinol. Its pathway is carotenoid biosynthesis; lycopene biosynthesis. Functionally, converts phytoene into zeta-carotene via the intermediary of phytofluene by the symmetrical introduction of two double bonds at the C-11 and C-11' positions of phytoene with a concomitant isomerization of two neighboring double bonds at the C9 and C9' positions from trans to cis. This is 15-cis-phytoene desaturase, chloroplastic/chromoplastic (PDS) from Solanum lycopersicum (Tomato).